The primary structure comprises 402 residues: 1-deoxy-D-xylulose 5-phosphate reductoisomerase (402 aa).

NADPH contacts are provided by Thr-10, Gly-11, Ser-12, Ile-13, Asn-38, and Asn-124. Residue Lys-125 participates in 1-deoxy-D-xylulose 5-phosphate binding. Residue Glu-126 participates in NADPH binding. Asp-150 is a Mn(2+) binding site. 1-deoxy-D-xylulose 5-phosphate contacts are provided by Ser-151, Glu-152, Ser-186, and His-209. Glu-152 contacts Mn(2+). Gly-215 lines the NADPH pocket. 1-deoxy-D-xylulose 5-phosphate contacts are provided by Ser-222, Asn-227, Lys-228, and Glu-231. Glu-231 is a binding site for Mn(2+).

The protein belongs to the DXR family. It depends on Mg(2+) as a cofactor. Requires Mn(2+) as cofactor.

The enzyme catalyses 2-C-methyl-D-erythritol 4-phosphate + NADP(+) = 1-deoxy-D-xylulose 5-phosphate + NADPH + H(+). It participates in isoprenoid biosynthesis; isopentenyl diphosphate biosynthesis via DXP pathway; isopentenyl diphosphate from 1-deoxy-D-xylulose 5-phosphate: step 1/6. Functionally, catalyzes the NADPH-dependent rearrangement and reduction of 1-deoxy-D-xylulose-5-phosphate (DXP) to 2-C-methyl-D-erythritol 4-phosphate (MEP). The chain is 1-deoxy-D-xylulose 5-phosphate reductoisomerase from Vibrio vulnificus (strain YJ016).